Consider the following 106-residue polypeptide: Large ribosomal subunit protein uL24 (106 aa).

Belongs to the universal ribosomal protein uL24 family. In terms of assembly, part of the 50S ribosomal subunit.

Its function is as follows. One of two assembly initiator proteins, it binds directly to the 5'-end of the 23S rRNA, where it nucleates assembly of the 50S subunit. In terms of biological role, one of the proteins that surrounds the polypeptide exit tunnel on the outside of the subunit. The protein is Large ribosomal subunit protein uL24 of Orientia tsutsugamushi (strain Boryong) (Rickettsia tsutsugamushi).